Consider the following 346-residue polypeptide: MLNETPALAPDGQPYRLLTLRNNAGMVVTLMDWGATLLSARIPLSDGSVREALLGCASPECYQDQAAFLGASIGRYANRIANSRYTFDGETVTLSPSQGVNQLHGGPEGFDKRRWQIVNQNDRQVLFALSSDDGDQGFPGNLGATVQYRLTDDNRISITYRATVDKPCPVNMTNHVYFNLDGEQSDVRNHKLQILADEYLPVDEGGIPHDGLKSVAGTSFDFRSAKIIASEFLADDDQRKVKGYDHAFLLQAKGDGKKVAAHVWSADEKLQLKVYTTAPALQFYSGNFLGGTPSRGTEPYADWQGLALESEFLPDSPNHPEWPQPDCFLRPGEEYSSLTEYQFIAE.

R79 is a binding site for substrate. H175 acts as the Proton donor in catalysis. Position 245 (D245) interacts with substrate. The active-site Proton acceptor is the E309.

Belongs to the aldose epimerase family.

It is found in the cytoplasm. The catalysed reaction is alpha-D-glucose = beta-D-glucose. It functions in the pathway carbohydrate metabolism; hexose metabolism. In terms of biological role, mutarotase converts alpha-aldose to the beta-anomer. It is active on D-glucose, L-arabinose, D-xylose, D-galactose, maltose and lactose. The sequence is that of Aldose 1-epimerase (galM) from Escherichia coli (strain K12).